A 147-amino-acid polypeptide reads, in one-letter code: Peptide methionine sulfoxide reductase MsrB 2 (147 aa).

The region spanning 6 to 129 is the MsrB domain; sequence TDEEVSKLTP…NSAALRFIPR (124 aa). Cysteine 118 functions as the Nucleophile in the catalytic mechanism.

The protein belongs to the MsrB Met sulfoxide reductase family.

It catalyses the reaction L-methionyl-[protein] + [thioredoxin]-disulfide + H2O = L-methionyl-(R)-S-oxide-[protein] + [thioredoxin]-dithiol. This is Peptide methionine sulfoxide reductase MsrB 2 (msrB2) from Rhizobium meliloti (strain 1021) (Ensifer meliloti).